The sequence spans 664 residues: Methionine--tRNA ligase (664 aa).

Positions 13–23 (PYTNGPCHIGH) match the 'HIGH' region motif. C144, C147, C156, and C160 together coordinate Zn(2+). Residues 327-331 (KFSKS) carry the 'KMSKS' region motif. K330 is a binding site for ATP. The region spanning 566–664 (EFGNLDIRIA…RPVKPGTKIR (99 aa)) is the tRNA-binding domain.

The protein belongs to the class-I aminoacyl-tRNA synthetase family. MetG type 1 subfamily. Homodimer. It depends on Zn(2+) as a cofactor.

It localises to the cytoplasm. The enzyme catalyses tRNA(Met) + L-methionine + ATP = L-methionyl-tRNA(Met) + AMP + diphosphate. Functionally, is required not only for elongation of protein synthesis but also for the initiation of all mRNA translation through initiator tRNA(fMet) aminoacylation. The sequence is that of Methionine--tRNA ligase from Methanoculleus marisnigri (strain ATCC 35101 / DSM 1498 / JR1).